A 462-amino-acid polypeptide reads, in one-letter code: ATP synthase subunit beta (462 aa).

152 to 159 (GGAGVGKT) is an ATP binding site.

Belongs to the ATPase alpha/beta chains family. In terms of assembly, F-type ATPases have 2 components, CF(1) - the catalytic core - and CF(0) - the membrane proton channel. CF(1) has five subunits: alpha(3), beta(3), gamma(1), delta(1), epsilon(1). CF(0) has three main subunits: a(1), b(2) and c(9-12). The alpha and beta chains form an alternating ring which encloses part of the gamma chain. CF(1) is attached to CF(0) by a central stalk formed by the gamma and epsilon chains, while a peripheral stalk is formed by the delta and b chains.

It localises to the cell inner membrane. The catalysed reaction is ATP + H2O + 4 H(+)(in) = ADP + phosphate + 5 H(+)(out). Functionally, produces ATP from ADP in the presence of a proton gradient across the membrane. The catalytic sites are hosted primarily by the beta subunits. The polypeptide is ATP synthase subunit beta (Aeromonas hydrophila subsp. hydrophila (strain ATCC 7966 / DSM 30187 / BCRC 13018 / CCUG 14551 / JCM 1027 / KCTC 2358 / NCIMB 9240 / NCTC 8049)).